Reading from the N-terminus, the 296-residue chain is Outer surface protein B (296 aa).

Positions 1–15 (MRLLIGFALALALIG) are cleaved as a signal peptide. Cys16 carries the N-palmitoyl cysteine lipid modification. Cys16 carries the S-diacylglycerol cysteine lipid modification. Positions 25 to 51 (GSQKENDLNLEDSSKKSHQNAKQDLPA) are disordered. A compositionally biased stretch (basic and acidic residues) spans 28–39 (KENDLNLEDSSK).

The protein localises to the cell outer membrane. The protein is Outer surface protein B (ospB) of Borreliella burgdorferi (strain ATCC 35210 / DSM 4680 / CIP 102532 / B31) (Borrelia burgdorferi).